Here is a 417-residue protein sequence, read N- to C-terminus: NADH-quinone oxidoreductase subunit D (417 aa).

This sequence belongs to the complex I 49 kDa subunit family. In terms of assembly, NDH-1 is composed of 14 different subunits. Subunits NuoB, C, D, E, F, and G constitute the peripheral sector of the complex.

The protein localises to the cell inner membrane. The enzyme catalyses a quinone + NADH + 5 H(+)(in) = a quinol + NAD(+) + 4 H(+)(out). In terms of biological role, NDH-1 shuttles electrons from NADH, via FMN and iron-sulfur (Fe-S) centers, to quinones in the respiratory chain. The immediate electron acceptor for the enzyme in this species is believed to be ubiquinone. Couples the redox reaction to proton translocation (for every two electrons transferred, four hydrogen ions are translocated across the cytoplasmic membrane), and thus conserves the redox energy in a proton gradient. This chain is NADH-quinone oxidoreductase subunit D, found in Polaromonas naphthalenivorans (strain CJ2).